A 455-amino-acid chain; its full sequence is Epoxide hydrolase 1 (455 aa).

A helical; Signal-anchor for type III membrane protein membrane pass occupies residues 1–21 (MWLEILLTSVLGFAIYWFISR). Over 22 to 455 (DKEETLPLED…RKFLSVLERQ (434 aa)) the chain is Cytoplasmic. Catalysis depends on Asp226, which acts as the Nucleophile. Residue Arg295 is modified to Dimethylated arginine. The active-site Proton donor is the Tyr374. His431 acts as the Proton acceptor in catalysis.

Belongs to the peptidase S33 family. Found in liver.

The protein resides in the microsome membrane. It localises to the endoplasmic reticulum membrane. It catalyses the reaction cis-stilbene oxide + H2O = (1R,2R)-hydrobenzoin. It carries out the reaction 1-(4-methoxyphenyl)-N-methyl-N-[(3-methyloxetan-3-yl)methyl]methanamine + H2O = 2-{[(4-methoxybenzyl)(methyl)amino]methyl}-2-methylpropane-1,3-diol. The enzyme catalyses 8,9-epoxy-(5Z,11Z,14Z)-eicosatrienoate + H2O = 8,9-dihydroxy-(5Z,11Z,14Z)-eicosatrienoate. The catalysed reaction is 11,12-epoxy-(5Z,8Z,14Z)-eicosatrienoate + H2O = 11,12-dihydroxy-(5Z,8Z,14Z)-eicosatrienoate. It catalyses the reaction 2-(5Z,8Z,11Z,14Z-eicosatetraenoyl)-glycerol + H2O = glycerol + (5Z,8Z,11Z,14Z)-eicosatetraenoate + H(+). With respect to regulation, inhibited by 10-hydroxystearamide and methoxy-arachidonyl fluorophosphate. Its function is as follows. Biotransformation enzyme that catalyzes the hydrolysis of arene and aliphatic epoxides to less reactive and more water soluble dihydrodiols by the trans addition of water. Plays a role in the metabolism of endogenous lipids such as epoxide-containing fatty acids. Metabolizes the abundant endocannabinoid 2-arachidonoylglycerol (2-AG) to free arachidonic acid (AA) and glycerol. Binds 20(S)-hydroxycholesterol (20(S)-OHC). This is Epoxide hydrolase 1 from Homo sapiens (Human).